A 188-amino-acid chain; its full sequence is Dual specificity protein phosphatase 18 (188 aa).

Positions 19–160 (GLSQITKSLF…LIHYELQLFG (142 aa)) constitute a Tyrosine-protein phosphatase domain. The interval 95-141 (MQKGRTLLHCAAGVSRSAALCLAYLMKYHAMSLVDAHTWTKSCRPII) is sufficient for mitochondrial localization. Catalysis depends on C104, which acts as the Phosphocysteine intermediate.

This sequence belongs to the protein-tyrosine phosphatase family. Non-receptor class dual specificity subfamily.

It localises to the cytoplasm. The protein localises to the nucleus. It is found in the mitochondrion inner membrane. It catalyses the reaction O-phospho-L-tyrosyl-[protein] + H2O = L-tyrosyl-[protein] + phosphate. It carries out the reaction O-phospho-L-seryl-[protein] + H2O = L-seryl-[protein] + phosphate. The enzyme catalyses O-phospho-L-threonyl-[protein] + H2O = L-threonyl-[protein] + phosphate. Functionally, can dephosphorylate single and diphosphorylated synthetic MAPK peptides, with preference for the phosphotyrosine and diphosphorylated forms over phosphothreonine. In vitro, dephosphorylates p-nitrophenyl phosphate (pNPP). The protein is Dual specificity protein phosphatase 18 (Dusp18) of Mus musculus (Mouse).